Consider the following 239-residue polypeptide: 7-cyano-7-deazaguanine synthase (239 aa).

13–23 (FSGGQDSTTCL) serves as a coordination point for ATP. Positions 201, 216, 219, and 222 each coordinate Zn(2+).

The protein belongs to the QueC family. The cofactor is Zn(2+).

The enzyme catalyses 7-carboxy-7-deazaguanine + NH4(+) + ATP = 7-cyano-7-deazaguanine + ADP + phosphate + H2O + H(+). The protein operates within purine metabolism; 7-cyano-7-deazaguanine biosynthesis. Functionally, catalyzes the ATP-dependent conversion of 7-carboxy-7-deazaguanine (CDG) to 7-cyano-7-deazaguanine (preQ(0)). The protein is 7-cyano-7-deazaguanine synthase of Bradyrhizobium sp. (strain BTAi1 / ATCC BAA-1182).